A 576-amino-acid polypeptide reads, in one-letter code: MAGUK p55 subfamily member 7 (576 aa).

L27 domains lie at 10-64 (CDMG…EKQN) and 65-122 (PLPI…YDPV). Residues 139-220 (IIRLVKNSEP…AITFKIIPST (82 aa)) enclose the PDZ domain. The 71-residue stretch at 228 to 298 (EGKIFIKALF…PSKHFQERRL (71 aa)) folds into the SH3 domain. The tract at residues 289-383 (PSKHFQERRL…VGPVGVGLNE (95 aa)) is phospho-regulated basic and hydrophobic (PRBH) motif. The Guanylate kinase-like domain maps to 368-560 (YRLIVLVGPV…AFNELKTTFD (193 aa)). Serine 409 carries the phosphoserine modification.

It belongs to the MAGUK family. Heterodimer; able to heterodimerize via its C-terminal L27 domain with LIN7A, LIN7B and LIN7C. Forms a tripartite complex composed of DLG1, MPP7 and LIN7 (LIN7A or LIN7C). Interacts with DLG1 via its N-terminal L27 domain. Interacts with PALS1 and PATJ. In terms of processing, phosphorylated by aPKC which promotes dissociation from the cell cortex.

It localises to the membrane. The protein localises to the lateral cell membrane. It is found in the cell junction. The protein resides in the tight junction. Its subcellular location is the adherens junction. It localises to the cytoplasm. The protein localises to the cell cortex. Its function is as follows. Acts as an important adapter that promotes epithelial cell polarity and tight junction formation via its interaction with DLG1. Involved in the assembly of protein complexes at sites of cell-cell contact. The polypeptide is MAGUK p55 subfamily member 7 (Mpp7) (Mus musculus (Mouse)).